The following is a 68-amino-acid chain: uncharacterized protein (68 aa).

A helical membrane pass occupies residues 24-44 (AHICKCIAMFFVVAGVVLMFF).

It localises to the endoplasmic reticulum. The protein localises to the membrane. This is an uncharacterized protein from Saccharomyces cerevisiae (strain ATCC 204508 / S288c) (Baker's yeast).